The sequence spans 192 residues: Neurogenic differentiation factor 1 (192 aa).

The bHLH domain maps to 19-71 (VRRVKANGRERARMHGLNNALDMLREYIPITTQHQKLSKIETLRLARNYIDAL). A disordered region spans residues 116 to 192 (PSQFDIFSDP…SHQNTFNYSP (77 aa)). Over residues 139-163 (SSFSSSSPSSSCSPPQYYYSPTQPS) the composition is skewed to low complexity.

In terms of tissue distribution, expressed in neuroblasts of the AB lineage. More specifically in precursors of the embryonic ventral cord motor neurons. Expressed to a lesser degree in the EMS lineage which generates mostly endoderm and mesoderm tissues.

Its subcellular location is the nucleus. Functionally, acts as a transcriptional regulator whose activity is required for several aspects of motor neuron fate specification, including cell division patterns, proper spatiotemporal expression of fate-specific markers, and normal axonal morphology and pathfinding. Involved in regulating glial specification. This Caenorhabditis elegans protein is Neurogenic differentiation factor 1 (cnd-1).